We begin with the raw amino-acid sequence, 427 residues long: MATHEEFIRTQVFGTVFEITNRYTDLNPVGMGAFGLVCSATDTLAQQPVAIKKIMKPFSTAVLAKRTYRELKLLKHLRHENLICLQDIFLSPLEDIYFVTELQGTDLHRLLQTRPLEKQFVQYFLYQILRGLKYVHSAGVIHRDLKPSNILINENCDLKICDFGLARIQDPQMTGYVSTRYYRAPEIMLTWQKYDVEVDIWSAGCIFAEMTEGKPLFPGKDHVHQFSIITDLLGSPPEDVINTICSENTLKFVTSLPHRDPVPFRERFKTVEPEAVDLLEKMLVFDPKKRITAADALVHPYLAPYHDPTDEPVADAKFDWNFNDADLPVDTWRVMMYSEILDFHKIGGGDGQIDTSATFDDQVAAATAAAAHAAAVAQAQAQAHSNSSNSNSSSNVNSKSKAARDSANDAITNYGNQAVHYANEFQQ.

The Protein kinase domain maps to 23 to 302 (YTDLNPVGMG…AADALVHPYL (280 aa)). Residues 29 to 37 (VGMGAFGLV) and Lys-52 each bind ATP. Asp-144 serves as the catalytic Proton acceptor. Thr-174 carries the post-translational modification Phosphothreonine. Positions 174–176 (TGY) match the TXY motif. Tyr-176 is subject to Phosphotyrosine. The segment covering 380–400 (QAQAHSNSSNSNSSSNVNSKS) has biased composition (low complexity). Residues 380–409 (QAQAHSNSSNSNSSSNVNSKSKAARDSAND) are disordered.

This sequence belongs to the protein kinase superfamily. Ser/Thr protein kinase family. MAP kinase subfamily. HOG1 sub-subfamily. Mg(2+) is required as a cofactor. In terms of processing, dually phosphorylated on Thr-174 and Tyr-176, which activates the enzyme. Phosphorylated during osmotic stress.

Its subcellular location is the cytoplasm. It is found in the nucleus. It carries out the reaction L-seryl-[protein] + ATP = O-phospho-L-seryl-[protein] + ADP + H(+). It catalyses the reaction L-threonyl-[protein] + ATP = O-phospho-L-threonyl-[protein] + ADP + H(+). Its activity is regulated as follows. Activated by tyrosine and threonine phosphorylation. In terms of biological role, proline-directed serine/threonine-protein kinase involved in a signal transduction pathway that is activated by changes in the osmolarity of the extracellular environment. Controls osmotic regulation of transcription of target genes. Involved in resistance to osmotic stress and tolerance to methylglyoxal and citric acid. This chain is Mitogen-activated protein kinase HOG1 (HOG1), found in Torulaspora delbrueckii (Yeast).